The chain runs to 2380 residues: Probable polyketide synthase 25 (2380 aa).

The span at 1-18 (MDNSYLNNPQFDINNGNK) shows a compositional bias: polar residues. The disordered stretch occupies residues 1–29 (MDNSYLNNPQFDINNGNKEVTDDDNNKNN). A Ketosynthase family 3 (KS3) domain is found at 31–457 (DNLVAIVGVG…GSNCCLVLSQ (427 aa)). Residues cysteine 198, histidine 340, and histidine 380 each act as for beta-ketoacyl synthase activity in the active site. The acyl/malonyl transferase stretch occupies residues 649 to 682 (GIKASFMLGHSLGEVTTAYCSGMIDIDQLCYLIY). Serine 659 functions as the For acyl/malonyl transferase activity in the catalytic mechanism. An N-terminal hotdog fold region spans residues 948–1070 (ISILGNSMQD…ANFQLYNNGK (123 aa)). The 287-residue stretch at 948-1234 (ISILGNSMQD…CTSLTPVKDP (287 aa)) folds into the PKS/mFAS DH domain. Histidine 982 acts as the Proton acceptor; for dehydratase activity in catalysis. The segment at 1085 to 1234 (NLSSIPWDKF…CTSLTPVKDP (150 aa)) is C-terminal hotdog fold. Aspartate 1148 functions as the Proton donor; for dehydratase activity in the catalytic mechanism. The Carrier domain occupies 2299 to 2376 (KNSTNIKDKF…MVCQIINDNF (78 aa)). At serine 2336 the chain carries O-(pantetheine 4'-phosphoryl)serine.

The cofactor is pantetheine 4'-phosphate.

Functionally, probable polyketide synthase. The chain is Probable polyketide synthase 25 (pks25) from Dictyostelium discoideum (Social amoeba).